A 347-amino-acid polypeptide reads, in one-letter code: Subtilase cytotoxin subunit A (347 aa).

The signal sequence occupies residues 1-21; it reads MLKILWTYILFLLFISASARA. The region spanning 24 to 327 is the Peptidase S8 domain; the sequence is PWYFDAIGLT…GRVLNAEKAI (304 aa). Active-site charge relay system residues include Asp-52, His-89, and Ser-272. Residues Cys-288 and Cys-331 are joined by a disulfide bond. Residues 322 to 347 are A2 domain; sequence NAEKAISMFCKKNYIPVRQGRMSEEL. The Prevents secretion from ER motif lies at 344–347; it reads SEEL.

It belongs to the peptidase S8 family. In terms of assembly, forms a complex with SubB with the stoichiometry SubA1:SubB5 (called SubAB5).

The protein localises to the secreted. It is found in the host cytoplasm. The protein resides in the host cytosol. Its subcellular location is the host endoplasmic reticulum lumen. Protease subunit of subtilase cytotoxin SubAB5. An endoprotease specific for host endoplasmic reticulum (ER) chaperone BiP/HSPA5, has no activity on human HSP70 or HSPA8. Cleaves between 'Leu-416' and 'Leu-417' of BiP/HSPA5 in the hinge between BiP's ATPase and protein-binding domains. This induces host ER stress response and eventual cell death. Culture supernatant of E.coli expressing both subA and subB are toxic for Vero cells (African green monkey kidney cell line), Chinese hamster ovary cells and Hct-8 cells (human colonic epithelial cell line); the subunits are not toxic individually. Purified SubAB5 is highly toxic, &lt;0.1 pg is able to kill at least 50% of 30'000 Vero cells in a microtiter plate assay after 3 days; no cytotoxicity is seen at 24 hours. Preabsorption with cells expressing a ganglioside GM2 mimic reduced cytotoxicity of SubAB5 by 93% in the Vero cytotoxicity assay. Intraperitoneal injection of 200 ng of purified SubAB5 kills mice; the higher the dose the faster the mice die. Animals injected intraperitoneally with purified SubAB5 have microvascular thrombi in the brain and other organs, including the renal tubules and glomeruli. Injection induces an unfolded response in mice. Mice fed E.coli cells expressing cloned SubAB5 experience drastic weight loss and appear ill and lethargic. Protein synthesis in Vero cells is transiently inhibited by SubAB5; both subunits are required for this effect. Inhibition of protein synthesis is prevented by brefeldin A; cells are arrested in the G1 phase. SubAB5 at 100 ng/ml induced caspase-dependent apoptosis in Vero cells through mitochondrial membrane damage. In Escherichia coli, this protein is Subtilase cytotoxin subunit A.